The following is a 90-amino-acid chain: Protein AF1q (90 aa).

The short motif at 24–32 (LSELEGLGL) is the Nuclear export signal element. The residue at position 84 (Ser-84) is a Phosphoserine.

The protein belongs to the MLLT11 family. In terms of assembly, interacts with HSPA8 and LAMP2 isoform A; the interaction may target MLLT11 for degradation via chaperone-mediated autophagy. Interacts with TCF7. Ubiquitinated, leading to degradation.

The protein localises to the nucleus. Its subcellular location is the cytoplasm. The protein resides in the cytoskeleton. It localises to the microtubule organizing center. It is found in the centrosome. Its function is as follows. Cofactor for the transcription factor TCF7. Involved in regulation of lymphoid development by driving multipotent hematopoietic progenitor cells towards a T-cell fate. In Pongo abelii (Sumatran orangutan), this protein is Protein AF1q (MLLT11).